Here is a 1024-residue protein sequence, read N- to C-terminus: Protein tiptop (1024 aa).

Residues 20-35 (ELTSPRCQSRDSNTSA) show a composition bias toward polar residues. Disordered stretches follow at residues 20–40 (ELTSPRCQSRDSNTSAGAGAG) and 138–215 (EGEV…ISAD). A compositionally biased stretch (acidic residues) spans 159 to 175 (DDQEEDQEQDQEQEQEQ). A C2H2-type 1 zinc finger spans residues 317–341 (FKCVWCKQSFSTLANLTAHMKETQH). The disordered stretch occupies residues 350-392 (LPTGGVGTPSAPPPTRLATSASNSACSSSSSSTSSSSNSSKSE). Low complexity predominate over residues 368 to 391 (TSASNSACSSSSSSTSSSSNSSKS). A C2H2-type 2 zinc finger spans residues 426–450 (LKCMWCGQSFRSLAEMTSHMQETQH). Disordered regions lie at residues 466–489 (GDERERPTNTGVPSTSTAAPSSPS), 519–576 (AQKS…SLDS), 712–759 (SRDR…IKAE), 786–818 (FSMEACRESPRSVSKSPAPQTERSPPDNGSLLA), and 868–891 (ETTDPPSTGLRSASSAGSSTASAT). Residues 477 to 489 (VPSTSTAAPSSPS) show a composition bias toward low complexity. The C2H2-type 3 zinc finger occupies 499 to 523 (LTCKVCDQAFGSLKELSTHMAQKSH). Residues 527-537 (SPAPSASPPAA) show a composition bias toward low complexity. Residues 543-558 (KRGRQNRNEKRKKSLP) show a composition bias toward basic residues. The span at 718 to 729 (SESSSASRVESS) shows a compositional bias: low complexity. Residues 745–755 (TPAPPPPPPPT) are compositionally biased toward pro residues. Residues 786–795 (FSMEACRESP) are compositionally biased toward basic and acidic residues. Residues 796–808 (RSVSKSPAPQTER) show a composition bias toward polar residues. The segment covering 874–891 (STGLRSASSAGSSTASAT) has biased composition (low complexity). The C2H2-type 4 zinc finger occupies 926–949 (IKCSYCDTPFASKGAYRHHLSKVH). A disordered region spans residues 954-1004 (AGEDSPRLKSPAVQSPRSMPLASPRRSASRSPATGSQQPPPSPTISPYDES). A compositionally biased stretch (low complexity) spans 968-990 (SPRSMPLASPRRSASRSPATGSQ).

It belongs to the teashirt C2H2-type zinc-finger protein family. In terms of tissue distribution, expression in the Malpighian tubules (MTs) and stomatogastric nervous system starts at embryonic stage 10. At stage 11, expression in the head domain is initiated in the clypeolabrum in two bilaterally symmetric clusters of cells. At stage 12, expression appears in the central nervous system (CNS) of the trunk and the epidermis. The staining in the hindgut is maintained throughout embryogenesis. At stage 13, expression is present in elongating MTs. The anterior staining is detected in cells that invaginate into the stomodeum and by stage 15 onwards, in cells close to the pharynx. Also expressed in cells of the brain, the second constriction of the gut, the trunk epidermis, the anterior segments of the CNS (the three thoracic and the first two abdominal segments) and in the MTs. From stage 12 onwards, tsh and tio are colocalized in some cells.

The protein localises to the nucleus. Tiptop (tio) and teashirt (tsh) have, on the whole, common activities. Tio and tsh repress each other's expression and tsh has a crucial role for trunk patterning that is in part masked by ectopic expression of tiptop. Both genes share a common activity required for the activation of Ser and svb and the maintenance of en and wg. In Drosophila melanogaster (Fruit fly), this protein is Protein tiptop (tio).